Reading from the N-terminus, the 408-residue chain is MIHQPPAGARDLLPLEVAQKGWINDCLQQVFQRWGYQRIVTSTIEWLDTLMAGGAIERSTVIQLQDTSEGTLGLRPELTASIARTAVSRMADSTYPQRICYRANVFRNPPPGYHGRQLEFYQAGVELLFAGGLLADGEILLLVADCLETLGLTDWHLILGEAGLTRSLLSVFPDPLRQQVRHCLAHLDYITLENLTYPSADLRERALLLFDLRGNPADVLSKVASLELEESDRIIVNNFKSLIHLIEQSHPNPLPLILDLSLVQTFDYYTGLVFKVVSSSDNQLRVLGQGGRYDQLLGLYHPQHQSAPGIGFSLNLEDLHLCLLSTSSSGMPRQIPVIDWLVIAQTTQSQVAAFNYAQLLRNSNTLVRVALDLGGRSPEEIRDYARTCRIKTLVWIGEDGTPRIETVQ.

Belongs to the class-II aminoacyl-tRNA synthetase family. HisZ subfamily. As to quaternary structure, heteromultimer composed of HisG and HisZ subunits.

Its subcellular location is the cytoplasm. It participates in amino-acid biosynthesis; L-histidine biosynthesis; L-histidine from 5-phospho-alpha-D-ribose 1-diphosphate: step 1/9. Required for the first step of histidine biosynthesis. May allow the feedback regulation of ATP phosphoribosyltransferase activity by histidine. The chain is ATP phosphoribosyltransferase regulatory subunit from Gloeothece citriformis (strain PCC 7424) (Cyanothece sp. (strain PCC 7424)).